We begin with the raw amino-acid sequence, 96 residues long: Putative pterin-4-alpha-carbinolamine dehydratase (96 aa).

The protein belongs to the pterin-4-alpha-carbinolamine dehydratase family.

It catalyses the reaction (4aS,6R)-4a-hydroxy-L-erythro-5,6,7,8-tetrahydrobiopterin = (6R)-L-erythro-6,7-dihydrobiopterin + H2O. This is Putative pterin-4-alpha-carbinolamine dehydratase from Prochlorococcus marinus (strain MIT 9303).